Here is a 115-residue protein sequence, read N- to C-terminus: Transmembrane protein 14C (115 aa).

A run of 4 helical transmembrane segments spans residues 8 to 28, 33 to 53, 63 to 83, and 88 to 108; these read LVPL…GGII, AGSV…GLGA, VWVF…RFYN, and MPAG…VAKI.

The protein belongs to the TMEM14 family.

It is found in the mitochondrion membrane. In terms of biological role, required for normal heme biosynthesis. In Rattus norvegicus (Rat), this protein is Transmembrane protein 14C (Tmem14c).